We begin with the raw amino-acid sequence, 133 residues long: Small ribosomal subunit protein uS8 (133 aa).

It belongs to the universal ribosomal protein uS8 family. Part of the 30S ribosomal subunit.

In terms of biological role, one of the primary rRNA binding proteins, it binds directly to 16S rRNA central domain where it helps coordinate assembly of the platform of the 30S subunit. In Desulfurococcus amylolyticus (strain DSM 18924 / JCM 16383 / VKM B-2413 / 1221n) (Desulfurococcus kamchatkensis), this protein is Small ribosomal subunit protein uS8.